The primary structure comprises 636 residues: Chaperone protein DnaK (636 aa).

A Phosphothreonine; by autocatalysis modification is found at Thr-196. The disordered stretch occupies residues 591-636 (LAEAMYKSSSQPGAQEAPPTDGQPKPDEKGKDNVVDAEFVDVDDKK). The segment covering 614-624 (PKPDEKGKDNV) has biased composition (basic and acidic residues).

The protein belongs to the heat shock protein 70 family.

In terms of biological role, acts as a chaperone. The chain is Chaperone protein DnaK from Solibacter usitatus (strain Ellin6076).